The primary structure comprises 279 residues: MTGPLATGRAGTGDDVVGVEVTIDGMLVIADRLHLVDFPVTLGIRPNIPQEDLREIVWDQVARDLTAQGVLDHNGQPHPAVAAMVDTLSRADRTLEGRWWRRDVGGVMVRFVVCRKGERHVIAVRDGDMLVLQLVAPRVGLAGMVTAVLGTAEPANVEPLTGIASELGECTNAAQLTRYGLTPTTARLYTEIVTNPKSWVEIVASERHPGGTTTHTKAAAGVLDSAHGRLVSLPRQVGGELYGSFLPGTEQNLQRALDSLLELLPSGSWLDRADATARG.

Belongs to the EspG family. Interacts specifically with ESX-1-dependent PE/PPE proteins.

The protein resides in the cytoplasm. Its function is as follows. Specific chaperone for cognate PE/PPE proteins. Plays an important role in preventing aggregation of PE/PPE dimers. This Mycobacterium marinum (strain ATCC BAA-535 / M) protein is ESX-1 secretion-associated protein EspG1.